We begin with the raw amino-acid sequence, 186 residues long: MADTWEAAHSAIKTGIIAYPTEAVFGLGCDPRNEVAVQKLLSLKQRPAEKGLILIAADYSQLLPYVEDSAIAQDKRFSVLSHWPGPVTLILPVRKGVSTLLTGGRDTIAVRVTAHEPARALCRELGHALVSTSANLTGQEPARTAAEVRQQFGDSVDWIMDESTGGAANPTRIINPLNNQVFRDDA.

Residues 1–186 enclose the YrdC-like domain; it reads MADTWEAAHS…LNNQVFRDDA (186 aa).

It belongs to the SUA5 family. TsaC subfamily.

The protein localises to the cytoplasm. The enzyme catalyses L-threonine + hydrogencarbonate + ATP = L-threonylcarbamoyladenylate + diphosphate + H2O. Its function is as follows. Required for the formation of a threonylcarbamoyl group on adenosine at position 37 (t(6)A37) in tRNAs that read codons beginning with adenine. Catalyzes the conversion of L-threonine, HCO(3)(-)/CO(2) and ATP to give threonylcarbamoyl-AMP (TC-AMP) as the acyladenylate intermediate, with the release of diphosphate. This Idiomarina loihiensis (strain ATCC BAA-735 / DSM 15497 / L2-TR) protein is Threonylcarbamoyl-AMP synthase.